Reading from the N-terminus, the 127-residue chain is DNA-directed RNA polymerase subunit omega (127 aa).

It belongs to the RNA polymerase subunit omega family. As to quaternary structure, the RNAP catalytic core consists of 2 alpha, 1 beta, 1 beta' and 1 omega subunit. When a sigma factor is associated with the core the holoenzyme is formed, which can initiate transcription.

The catalysed reaction is RNA(n) + a ribonucleoside 5'-triphosphate = RNA(n+1) + diphosphate. Functionally, promotes RNA polymerase assembly. Latches the N- and C-terminal regions of the beta' subunit thereby facilitating its interaction with the beta and alpha subunits. The sequence is that of DNA-directed RNA polymerase subunit omega from Rickettsia peacockii (strain Rustic).